Consider the following 489-residue polypeptide: Long chain base biosynthesis protein 2d (489 aa).

A helical membrane pass occupies residues 4 to 24 (LPYVTALTTLFSYGLLFAFGQ). Lys-311 carries the post-translational modification N6-(pyridoxal phosphate)lysine.

Belongs to the class-II pyridoxal-phosphate-dependent aminotransferase family. In terms of assembly, heterodimer with LCB1. Component of the serine palmitoyltransferase (SPT) complex, composed of LCB1 and LCB2. The cofactor is pyridoxal 5'-phosphate.

The protein localises to the endoplasmic reticulum membrane. The catalysed reaction is L-serine + hexadecanoyl-CoA + H(+) = 3-oxosphinganine + CO2 + CoA. It participates in lipid metabolism; sphingolipid metabolism. Functionally, serine palmitoyltransferase (SPT). The heterodimer formed with LCB1 constitutes the catalytic core. This is Long chain base biosynthesis protein 2d from Oryza sativa subsp. japonica (Rice).